The chain runs to 333 residues: Nucleoid-associated protein PSPPH_1145 (333 aa).

It belongs to the YejK family.

The protein resides in the cytoplasm. It localises to the nucleoid. The protein is Nucleoid-associated protein PSPPH_1145 of Pseudomonas savastanoi pv. phaseolicola (strain 1448A / Race 6) (Pseudomonas syringae pv. phaseolicola (strain 1448A / Race 6)).